Here is a 639-residue protein sequence, read N- to C-terminus: ATP-dependent zinc metalloprotease FtsH (639 aa).

Residues 1-20 are Cytoplasmic-facing; it reads MNGNNNMNNNGKSNNKKKNK. The chain crosses the membrane as a helical span at residues 21-41; it reads NWILGLVVVFLISAIFMSYFI. At 42 to 120 the chain is on the periplasmic side; it reads RGGESYKNVP…LSSGKSQASL (79 aa). A helical transmembrane segment spans residues 121 to 141; sequence IGVLLQTLPWILFFIFFFFIF. The Cytoplasmic portion of the chain corresponds to 142–639; it reads RQTQGGGGKV…KEVKGEDVKG (498 aa). 212 to 219 contacts ATP; that stretch reads GSPGTGKT. His434 is a binding site for Zn(2+). Residue Glu435 is part of the active site. The Zn(2+) site is built by His438 and Asp510.

This sequence in the central section; belongs to the AAA ATPase family. The protein in the C-terminal section; belongs to the peptidase M41 family. In terms of assembly, homohexamer. Zn(2+) is required as a cofactor.

Its subcellular location is the cell inner membrane. Acts as a processive, ATP-dependent zinc metallopeptidase for both cytoplasmic and membrane proteins. Plays a role in the quality control of integral membrane proteins. The polypeptide is ATP-dependent zinc metalloprotease FtsH (Borreliella burgdorferi (strain ZS7) (Borrelia burgdorferi)).